A 139-amino-acid polypeptide reads, in one-letter code: FAD synthase (139 aa).

Residues 8 to 9 (VF), 13 to 16 (HPGH), Asp-92, and Tyr-119 each bind ATP.

It belongs to the archaeal FAD synthase family. In terms of assembly, homodimer. A divalent metal cation is required as a cofactor.

It carries out the reaction FMN + ATP + H(+) = FAD + diphosphate. The protein operates within cofactor biosynthesis; FAD biosynthesis; FAD from FMN: step 1/1. Catalyzes the transfer of the AMP portion of ATP to flavin mononucleotide (FMN) to produce flavin adenine dinucleotide (FAD) coenzyme. The sequence is that of FAD synthase from Picrophilus torridus (strain ATCC 700027 / DSM 9790 / JCM 10055 / NBRC 100828 / KAW 2/3).